The sequence spans 376 residues: Germination-specific cysteine protease 1 (376 aa).

The first 22 residues, 1–22 (MAPSTKVLSLLLLYVVVSLASG), serve as a signal peptide directing secretion. Residues 23–144 (DESIINDHLQ…KYSAAVNGKE (122 aa)) constitute a propeptide, activation peptide. A glycan (N-linked (GlcNAc...) asparagine) is linked at Asn93. Disulfide bonds link Cys166-Cys208, Cys200-Cys241, and Cys299-Cys351. Cys169 is a catalytic residue. Catalysis depends on residues His305 and Asn325.

The protein belongs to the peptidase C1 family.

Functionally, probable thiol protease. In Arabidopsis thaliana (Mouse-ear cress), this protein is Germination-specific cysteine protease 1.